The following is a 277-amino-acid chain: Bifunctional protein FolD (277 aa).

NADP(+) contacts are provided by residues 164-166 (GRS), Ser-189, and Thr-230.

Belongs to the tetrahydrofolate dehydrogenase/cyclohydrolase family. In terms of assembly, homodimer.

It carries out the reaction (6R)-5,10-methylene-5,6,7,8-tetrahydrofolate + NADP(+) = (6R)-5,10-methenyltetrahydrofolate + NADPH. It catalyses the reaction (6R)-5,10-methenyltetrahydrofolate + H2O = (6R)-10-formyltetrahydrofolate + H(+). Its pathway is one-carbon metabolism; tetrahydrofolate interconversion. Catalyzes the oxidation of 5,10-methylenetetrahydrofolate to 5,10-methenyltetrahydrofolate and then the hydrolysis of 5,10-methenyltetrahydrofolate to 10-formyltetrahydrofolate. The polypeptide is Bifunctional protein FolD (Clostridium perfringens (strain SM101 / Type A)).